Consider the following 373-residue polypeptide: Sorting nexin-21 (373 aa).

The interval 1 to 107 (MHRGTQEGAM…RSPPPDGQWG (107 aa)) is disordered. The span at 21–37 (ALAGDGPGEAAASPEAE) shows a compositional bias: low complexity. Over residues 55-65 (SRLSGTLSFTS) the composition is skewed to polar residues. Positions 66–81 (AEDDEDDEDEDDEEAG) are enriched in acidic residues. The 118-residue stretch at 129–246 (QRLLFEVTSA…DFFVLPELRR (118 aa)) folds into the PX domain. A 1,2-diacyl-sn-glycero-3-phospho-(1D-myo-inositol-3-phosphate)-binding residues include Arg-171, Ser-173, Lys-198, and Arg-212.

It belongs to the sorting nexin family. Monomer. As to expression, highly expressed in fetus liver, but only weakly expressed in brain, skeleton muscle, smooth muscle, and cardiac muscle, kidney, and adrenal gland.

Its subcellular location is the cytoplasmic vesicle membrane. It localises to the early endosome membrane. Binds to membranes enriched in phosphatidylinositol 3-phosphate (PtdIns(P3)) and phosphatidylinositol 4,5-bisphosphate. May be involved in several stages of intracellular trafficking. This chain is Sorting nexin-21 (SNX21), found in Homo sapiens (Human).